The sequence spans 167 residues: Small ribosomal subunit protein uS3m (167 aa).

The N-terminal 35 residues, 1-35 (MVALYCGGGLRPLMLSWSRDLPCIWRALHTSAVCF), are a transit peptide targeting the mitochondrion.

It belongs to the universal ribosomal protein uS3 family. In terms of assembly, component of the mitochondrial ribosome small subunit (28S) which comprises a 12S rRNA and about 30 distinct proteins.

It is found in the mitochondrion. This Bos taurus (Bovine) protein is Small ribosomal subunit protein uS3m (MRPS24).